A 738-amino-acid polypeptide reads, in one-letter code: Leucine-rich repeat flightless-interacting protein 1 (738 aa).

At threonine 2 the chain carries N-acetylthreonine. Serine 16 bears the Phosphoserine mark. Positions 40–65 (IRMKELERQQKEVEERPDKDFAEKGS) are enriched in basic and acidic residues. Residues 40-98 (IRMKELERQQKEVEERPDKDFAEKGSRNMPSLSAATLASLGGTSSRRGSGDTSISMDTE) are disordered. Positions 78-94 (SLGGTSSRRGSGDTSIS) are enriched in low complexity. A phosphoserine mark is found at serine 83, serine 84, serine 88, and serine 92. Positions 94 to 194 (SMDTEASIRE…LRQREEMLEK (101 aa)) form a coiled coil. Residue lysine 249 forms a Glycyl lysine isopeptide (Lys-Gly) (interchain with G-Cter in SUMO1) linkage. Composition is skewed to basic and acidic residues over residues 253–262 (VEKVGQRETL) and 277–297 (DCVD…RPVE). Residues 253–738 (VEKVGQRETL…SKSKEDCTMS (486 aa)) form a disordered region. Serine 302 carries the post-translational modification Phosphoserine. Residues 314–326 (EVQSQDQENTSIL) are compositionally biased toward polar residues. Basic and acidic residues predominate over residues 330–347 (EQIESHEVTNKSDSRDSN). Serine 346 and serine 348 each carry phosphoserine. The span at 371-380 (KNQSENSMDS) shows a compositional bias: polar residues. 2 stretches are compositionally biased toward basic and acidic residues: residues 381-400 (QGKE…RPDH) and 467-476 (SERELAHEAA). Positions 479-580 (EEALTQSSQA…KNKKKKAAAP (102 aa)) are DNA-binding. Composition is skewed to polar residues over residues 483-495 (TQSS…NTVT) and 520-534 (TVQS…PGST). A compositionally biased stretch (basic and acidic residues) spans 535-553 (DTKHTSPHAKERNKAKSEQ). Residues serine 551 and serine 560 each carry the phosphoserine modification. Over residues 563–577 (KKTKNKKKKNKKKKA) the composition is skewed to basic residues. The segment covering 606 to 626 (RVQATDKKWAAETPELKEDPQ) has biased composition (basic and acidic residues). Phosphoserine is present on residues serine 675 and serine 701. Composition is skewed to basic and acidic residues over residues 691–703 (QADE…HSVD) and 720–738 (EQAR…CTMS).

The protein belongs to the LRRFIP family. Homodimer. May also form higher oligomers. Interacts with FLII. Interacts with MYD88. Competes with FLII for MyD88-binding, even in the absence of LPS.

It localises to the nucleus. Its subcellular location is the cytoplasm. In terms of biological role, transcriptional repressor which preferentially binds to the GC-rich consensus sequence (5'-AGCCCCCGGCG-3') and may regulate expression of TNF, EGFR and PDGFA. May control smooth muscle cells proliferation following artery injury through PDGFA repression. May also bind double-stranded RNA. Positively regulates Toll-like receptor (TLR) signaling in response to agonist probably by competing with the negative FLII regulator for MYD88-binding. The chain is Leucine-rich repeat flightless-interacting protein 1 (Lrrfip1) from Rattus norvegicus (Rat).